The following is a 485-amino-acid chain: Hydrogenase transcriptional regulatory protein HoxA (485 aa).

One can recognise a Response regulatory domain in the interval 6–120 (TILVVDDEVR…QLVETVKEAV (115 aa)). Asp54 bears the 4-aspartylphosphate mark. The Sigma-54 factor interaction domain occupies 166–392 (STESPMHAVI…ELQNEIQRMA (227 aa)). ATP is bound by residues 192-199 (GESGTGKE) and 264-273 (EIGETSPAFQ). Positions 404 to 426 (PLLGRRNGKRSAPLPAHGRLNGS) are disordered. The segment at residues 451–470 (NISRVASELGLSRVGLRNKL) is a DNA-binding region (H-T-H motif).

The protein localises to the cytoplasm. Probable member of the two-component regulatory system involved in the regulation of the hydrogenase activity. HoxA is probably phosphorylated by a sensory component (which could be HoxX) and then acts in conjunction with sigma-54 as a transcriptional activator. The protein is Hydrogenase transcriptional regulatory protein HoxA (hoxA) of Bradyrhizobium diazoefficiens (strain JCM 10833 / BCRC 13528 / IAM 13628 / NBRC 14792 / USDA 110).